A 648-amino-acid polypeptide reads, in one-letter code: Bifunctional lysine-specific demethylase and histidyl-hydroxylase NO66 (648 aa).

Residues 1 to 168 (MSKVSSIFDT…KGAKAAKKNK (168 aa)) are disordered. A compositionally biased stretch (low complexity) spans 17–28 (PATTENGAAAKP). Residues 109-119 (DHRKHKEKLRK) show a composition bias toward basic residues. The segment covering 123–137 (GVENSRQAAASTSML) has biased composition (polar residues). The segment covering 155–168 (PVHHKGAKAAKKNK) has biased composition (basic residues). The region spanning 308–453 (CSIRMLNPQT…DLLELYLPHA (146 aa)) is the JmjC domain. Residues histidine 354, aspartate 356, and histidine 419 each contribute to the Fe cation site.

It belongs to the ROX family. NO66 subfamily. Requires Fe(2+) as cofactor.

It is found in the nucleus. It catalyses the reaction N(6),N(6)-dimethyl-L-lysyl(36)-[histone H3] + 2 2-oxoglutarate + 2 O2 = L-lysyl(36)-[histone H3] + 2 formaldehyde + 2 succinate + 2 CO2. Functionally, oxygenase that can act as both a histone lysine demethylase and a ribosomal histidine hydroxylase. Specifically demethylates 'Lys-4' (H3K4me) and 'Lys-36' (H3K36me) of histone H3, thereby playing a central role in histone code. The protein is Bifunctional lysine-specific demethylase and histidyl-hydroxylase NO66 of Culex quinquefasciatus (Southern house mosquito).